An 89-amino-acid chain; its full sequence is Large ribosomal subunit protein eL34 (89 aa).

The protein belongs to the eukaryotic ribosomal protein eL34 family.

This is Large ribosomal subunit protein eL34 (rpl34e) from Methanocaldococcus jannaschii (strain ATCC 43067 / DSM 2661 / JAL-1 / JCM 10045 / NBRC 100440) (Methanococcus jannaschii).